The following is a 157-amino-acid chain: MFDVLIYLFETYMHNEPEMLVDQDKITDDLADAGFYREDINNALNWLEVLADLQEGQKAPYLYTADPQALRIYTVEECRRLGAACRGFILFLEQIQVLQFDTREMVIDRIMALDSPEIDLEDLKWVVLMVLFNIPGYENAYKQMEELLFEVNDGYLH.

The protein belongs to the Smg family.

This Yersinia pseudotuberculosis serotype O:1b (strain IP 31758) protein is Protein Smg.